Consider the following 706-residue polypeptide: Ribosomal RNA large subunit methyltransferase K/L (706 aa).

A THUMP domain is found at 43 to 154; it reads LLYQSLLWSR…RDMASVALDL (112 aa).

Belongs to the methyltransferase superfamily. RlmKL family.

Its subcellular location is the cytoplasm. The catalysed reaction is guanosine(2445) in 23S rRNA + S-adenosyl-L-methionine = N(2)-methylguanosine(2445) in 23S rRNA + S-adenosyl-L-homocysteine + H(+). It catalyses the reaction guanosine(2069) in 23S rRNA + S-adenosyl-L-methionine = N(2)-methylguanosine(2069) in 23S rRNA + S-adenosyl-L-homocysteine + H(+). Functionally, specifically methylates the guanine in position 2445 (m2G2445) and the guanine in position 2069 (m7G2069) of 23S rRNA. In Serratia proteamaculans (strain 568), this protein is Ribosomal RNA large subunit methyltransferase K/L.